Consider the following 268-residue polypeptide: Cytochrome b-c1 complex subunit Rieske-3, mitochondrial (268 aa).

A mitochondrion-targeting transit peptide spans 1-56 (MLRIAGRKLSSSAATRSSSAFFTRNPFTFTDDSSSPARSPSPASLASQFLDQFRGF). The Mitochondrial matrix portion of the chain corresponds to 57–105 (SSNSVSPAHQTGLVSDLPATVAAIKNPSSKIVYDDSNHERYPPGDPSKR). The helical transmembrane segment at 106 to 128 (AFAYFVLTGGRFVYASLVRLLIL) threads the bilayer. Residues 129–268 (KFVLSMSASK…FMEENKLLIG (140 aa)) are Mitochondrial intermembrane-facing. A Rieske domain is found at 178–266 (INLANSVDLG…YSFMEENKLL (89 aa)). Residues Cys-211, His-213, Cys-230, and His-233 each coordinate [2Fe-2S] cluster. The cysteines at positions 216 and 232 are disulfide-linked.

The protein belongs to the Rieske iron-sulfur protein family. Component of the ubiquinol-cytochrome c oxidoreductase (cytochrome b-c1 complex, complex III, CIII), a multisubunit enzyme composed of 3 respiratory subunits cytochrome b, cytochrome c1 and Rieske protein, 2 core protein subunits, and several low-molecular weight protein subunits. The complex exists as an obligatory dimer and forms supercomplexes (SCs) in the inner mitochondrial membrane with cytochrome c oxidase (complex IV, CIV). [2Fe-2S] cluster is required as a cofactor. In terms of tissue distribution, high levels are seen in the flowers while a low level expression is seen in the roots, leaves and stems.

The protein resides in the mitochondrion inner membrane. The enzyme catalyses a quinol + 2 Fe(III)-[cytochrome c](out) = a quinone + 2 Fe(II)-[cytochrome c](out) + 2 H(+)(out). In terms of biological role, component of the ubiquinol-cytochrome c oxidoreductase, a multisubunit transmembrane complex that is part of the mitochondrial electron transport chain which drives oxidative phosphorylation. The respiratory chain contains 3 multisubunit complexes succinate dehydrogenase (complex II, CII), ubiquinol-cytochrome c oxidoreductase (cytochrome b-c1 complex, complex III, CIII) and cytochrome c oxidase (complex IV, CIV), that cooperate to transfer electrons derived from NADH and succinate to molecular oxygen, creating an electrochemical gradient over the inner membrane that drives transmembrane transport and the ATP synthase. The cytochrome b-c1 complex catalyzes electron transfer from ubiquinol to cytochrome c, linking this redox reaction to translocation of protons across the mitochondrial inner membrane, with protons being carried across the membrane as hydrogens on the quinol. In the process called Q cycle, 2 protons are consumed from the matrix, 4 protons are released into the intermembrane space and 2 electrons are passed to cytochrome c. The Rieske protein is a catalytic core subunit containing a [2Fe-2S] iron-sulfur cluster. It cycles between 2 conformational states during catalysis to transfer electrons from the quinol bound in the Q(0) site in cytochrome b to cytochrome c1. The sequence is that of Cytochrome b-c1 complex subunit Rieske-3, mitochondrial from Nicotiana tabacum (Common tobacco).